The following is a 695-amino-acid chain: MAFWKPGTEKPRFEEDGEGGIVFMSNNLASSSSSSYGYANIEKQRQRLPVYKYRTEILYLVENHATTIIVGETGSGKTTQIPQYLKEAGWAEGGRVIACTQPRRLAVQAVSARVAEEMGVNLGEEVGYTIRFEDHTTSGVTSVKFLTDGVLIREMMEDPLLTKYSVIMIDEAHERSISTDILLGLLKKIQRRRPELRLIISSATIEAKTMSNFFNSSKKRHAPEGSTPGPKLEPAILSVEGRGFSVKIHYVEEPVSDYIRSVVSTILLINEREPPGDVLVFLTGQEDIETAIKLLEEEAHSNQKNSSGLLPLPLYSGLSRSEQELIFTPTPRGKRKVILSTNIAETSLTLEGVVYVIDSGFSKQKFYNPISDIESLVVAPISKASARQRSGRAGRVRPGKCYRLYTEDYFLNQMPGEGIPEMQRSNLVSTVIQLKALGIDNILGFDWPAPPSSEAMIRALEVLYSLQILDDDAKLTSPTGFQVAELPLDPMISKMILASSELGCSHEIITIAAVLSVQSVWIIARGVQKEQDEAKLRFAAAEGDHVTFLNVYKGFLESKKPTQWCYKNFLNYQSMKKVVEIRDQLKRIARRLGITLKSCDGDMEAVRKAVTAGFFANACRLEPHSNGVYKTIRGSEEVYIHPSSVLFRVNPKWVVYQSIVSTERQYMRNVVTINPSWLTEVAPHFYQNRQNAMSF.

The Helicase ATP-binding domain occupies 58-223; it reads LYLVENHATT…FNSSKKRHAP (166 aa). 71 to 78 serves as a coordination point for ATP; it reads GETGSGKT. Residues 170-173 carry the DEAH box motif; sequence DEAH. The Helicase C-terminal domain maps to 261-438; it reads SVVSTILLIN…STVIQLKALG (178 aa).

This sequence belongs to the DEAD box helicase family. DEAH subfamily. DDX35 sub-subfamily.

It carries out the reaction ATP + H2O = ADP + phosphate + H(+). Its function is as follows. May be involved in pre-mRNA splicing. This Arabidopsis thaliana (Mouse-ear cress) protein is Probable pre-mRNA-splicing factor ATP-dependent RNA helicase DEAH9.